A 162-amino-acid polypeptide reads, in one-letter code: Probable chemoreceptor glutamine deamidase CheD (162 aa).

Belongs to the CheD family.

The enzyme catalyses L-glutaminyl-[protein] + H2O = L-glutamyl-[protein] + NH4(+). Its function is as follows. Probably deamidates glutamine residues to glutamate on methyl-accepting chemotaxis receptors (MCPs), playing an important role in chemotaxis. This is Probable chemoreceptor glutamine deamidase CheD from Clostridium novyi (strain NT).